The primary structure comprises 397 residues: Acetate kinase (397 aa).

A Mg(2+)-binding site is contributed by Asn-7. Lys-14 contributes to the ATP binding site. Arg-91 contacts substrate. Catalysis depends on Asp-148, which acts as the Proton donor/acceptor. Residues 208–212 (HLGNG), 283–285 (DLR), and 331–335 (GVGEN) contribute to the ATP site. Glu-384 is a binding site for Mg(2+).

This sequence belongs to the acetokinase family. In terms of assembly, homodimer. Mg(2+) serves as cofactor. Mn(2+) is required as a cofactor.

The protein resides in the cytoplasm. The catalysed reaction is acetate + ATP = acetyl phosphate + ADP. It functions in the pathway metabolic intermediate biosynthesis; acetyl-CoA biosynthesis; acetyl-CoA from acetate: step 1/2. In terms of biological role, catalyzes the formation of acetyl phosphate from acetate and ATP. Can also catalyze the reverse reaction. The protein is Acetate kinase of Syntrophomonas wolfei subsp. wolfei (strain DSM 2245B / Goettingen).